The chain runs to 458 residues: ATP synthase subunit beta (458 aa).

ATP is bound at residue 148-155; that stretch reads GGAGVGKT.

The protein belongs to the ATPase alpha/beta chains family. As to quaternary structure, F-type ATPases have 2 components, CF(1) - the catalytic core - and CF(0) - the membrane proton channel. CF(1) has five subunits: alpha(3), beta(3), gamma(1), delta(1), epsilon(1). CF(0) has three main subunits: a(1), b(2) and c(9-12). The alpha and beta chains form an alternating ring which encloses part of the gamma chain. CF(1) is attached to CF(0) by a central stalk formed by the gamma and epsilon chains, while a peripheral stalk is formed by the delta and b chains.

It localises to the cell inner membrane. The catalysed reaction is ATP + H2O + 4 H(+)(in) = ADP + phosphate + 5 H(+)(out). Its function is as follows. Produces ATP from ADP in the presence of a proton gradient across the membrane. The catalytic sites are hosted primarily by the beta subunits. This is ATP synthase subunit beta from Halorhodospira halophila (strain DSM 244 / SL1) (Ectothiorhodospira halophila (strain DSM 244 / SL1)).